The primary structure comprises 214 residues: MSRLIIVFIVVTMICAATALSSKKSINEDEKDEKRSVAVAGAVIEGATLTFNVLQTVLKALGDISRKIAVGIDNESGMTWTAMNTYFRSGTSDVILPHTVPHGKALLYNGQKDRGPVATGVVGVLAYAMSDGNTLAVLFSIPFDYNLYSNWWNVKVYKGHRRADQRMYEELYYNLSPFRGDNGWHNRDLGYGLKGRGFMNSSGQSILEIHVTKA.

An N-terminal signal peptide occupies residues 1–19; sequence MSRLIIVFIVVTMICAATA. The propeptide occupies 20-35; sequence LSSKKSINEDEKDEKR. The tract at residues 38–47 is plays an important role in the hemolytic activity; that stretch reads AVAGAVIEGA. Residues 46–65 form an N-terminal region region; it reads GATLTFNVLQTVLKALGDIS. Phosphocholine-binding residues include Ser89, Val122, Ser140, Pro142, Tyr168, Tyr172, and Tyr173. A trp-rich region, which is important for the binding to lipid membrane region spans residues 140–155; the sequence is SIPFDYNLYSNWWNVK. The Cell attachment site, crucial for protein stability motif lies at 179–181; that stretch reads RGD.

It belongs to the actinoporin family. Sea anemone subfamily. In terms of assembly, octamer or nonamer in membranes. Monomer in the soluble state.

It localises to the secreted. Its subcellular location is the nematocyst. The protein localises to the target cell membrane. Pore-forming protein that forms cations-selective hydrophilic pores of around 1 nm and causes cytolysis. Pore formation is a multi-step process that involves specific recognition of membrane sphingomyelin (but neither cholesterol nor phosphatidylcholine) using aromatic rich region and adjacent phosphocholine (POC) binding site, firm binding to the membrane (mainly driven by hydrophobic interactions) accompanied by the transfer of the N-terminal region to the lipid-water interface and finally pore formation after oligomerization of monomers. This Actinia equina (Beadlet anemone) protein is DELTA-actitoxin-Aeq1b.